A 328-amino-acid chain; its full sequence is dITP/XTP pyrophosphatase (328 aa).

The interval 1–129 (MSEKIYEYKD…ATSEQGFGDI (129 aa)) is unknown. The segment at 130 to 324 (ILIATRNEGK…KLMEVFPAWQ (195 aa)) is NTP pyrophosphatase. 134–139 (TRNEGK) contacts substrate. The active-site Proton acceptor is Asp196. Position 196 (Asp196) interacts with Mg(2+). Residues Ser197, 280–283 (FGYD), Lys303, and 308–309 (HR) contribute to the substrate site.

This sequence belongs to the HAM1 NTPase family. In terms of assembly, homodimer. The cofactor is Mg(2+).

The catalysed reaction is XTP + H2O = XMP + diphosphate + H(+). It catalyses the reaction dITP + H2O = dIMP + diphosphate + H(+). The enzyme catalyses ITP + H2O = IMP + diphosphate + H(+). Its function is as follows. Pyrophosphatase that catalyzes the hydrolysis of nucleoside triphosphates to their monophosphate derivatives, with a high preference for the non-canonical purine nucleotides XTP (xanthosine triphosphate), dITP (deoxyinosine triphosphate) and ITP. Seems to function as a house-cleaning enzyme that removes non-canonical purine nucleotides from the nucleotide pool, thus preventing their incorporation into DNA/RNA and avoiding chromosomal lesions. This chain is dITP/XTP pyrophosphatase, found in Streptococcus pyogenes serotype M1.